The primary structure comprises 1097 residues: DNA-directed RNA polymerase subunit beta (1097 aa).

Positions 1072 to 1097 (QDVNPRRSTPSRPTYESLGVADYDED) are disordered.

It belongs to the RNA polymerase beta chain family. In cyanobacteria the RNAP catalytic core is composed of 2 alpha, 1 beta, 1 beta', 1 gamma and 1 omega subunit. When a sigma factor is associated with the core the holoenzyme is formed, which can initiate transcription.

It carries out the reaction RNA(n) + a ribonucleoside 5'-triphosphate = RNA(n+1) + diphosphate. DNA-dependent RNA polymerase catalyzes the transcription of DNA into RNA using the four ribonucleoside triphosphates as substrates. In Synechococcus sp. (strain CC9605), this protein is DNA-directed RNA polymerase subunit beta.